Reading from the N-terminus, the 287-residue chain is (S)-phenoxypropionate/alpha-ketoglutarate-dioxygenase (287 aa).

Positions 102 and 104 each coordinate Fe cation. 2-oxoglutarate is bound by residues T129 and W242. H257 lines the Fe cation pocket. R268 contacts 2-oxoglutarate.

Belongs to the TfdA dioxygenase family. As to quaternary structure, monomer. Requires Fe cation as cofactor. L-ascorbate serves as cofactor.

The catalysed reaction is (S)-2-(4-chloro-2-methylphenoxy)propanoate + 2-oxoglutarate + O2 = 2-methyl-4-chlorophenol + pyruvate + succinate + CO2. It catalyses the reaction (S)-(2,4-dichlorophenoxy)propanoate + 2-oxoglutarate + O2 = 2,4-dichlorophenol + pyruvate + succinate + CO2. Its pathway is xenobiotic degradation; 2-(2,4-dichlorophenoxy)propanoate degradation. Functionally, involved in the degradation of the phenoxypropionate herbicides. Catalyzes the enantiospecific cleavage of the ether bond in the herbicid S-dichlorprop ((S)-2-(2,4-dichlorophenoxy)propionate)(S-2,4-DP) and S-mecoprop ((S)-2-(4-chloro-2-methylphenoxy)propionate)(S-2,4-MCPP). It can also accept (RS)-2-(4-chloro-2-methylphenoxy)propionate ((RS)-2,4-MCPP) and phenoxyacetate derivatives such as 2,4-dichlorophenoxyacetate (2,4-D), however it can only accept 2-oxoglutarate as oxygen acceptor. This is (S)-phenoxypropionate/alpha-ketoglutarate-dioxygenase from Sphingobium herbicidovorans (strain ATCC 700291 / DSM 11019 / CCUG 56400 / KCTC 2939 / LMG 18315 / NBRC 16415 / MH) (Sphingomonas herbicidovorans).